We begin with the raw amino-acid sequence, 75 residues long: MTKNFIVTLKKNTPDVEAKKFLDSVHHAGGSIVHKFDIIKGYTIKVPDVLHLNKLKEKHNDVIENVEEDKEVHTN.

Threonine 74 carries the phosphothreonine modification.

It belongs to the protease inhibitor I9 family. In terms of assembly, part of the heterodimeric LMA1 complex together with the thioredoxin II/TRX2. LMA1 binds to the ATPase SEC18.

The protein localises to the cytoplasm. The protein resides in the nucleus. In terms of biological role, cytosolic inhibitor of vacuolar proteinase B (yscB), probably regulating protease B activity during limited proteolysis. PBI2 is a component of the LMA1 complex, which is involved in the facilitation of vesicle fusion such as homotypic vacuole and ER-derived COPII vesicle fusion with the Golgi. This chain is Protease B inhibitor 1 (PBI2), found in Saccharomyces cerevisiae (Baker's yeast).